Here is a 306-residue protein sequence, read N- to C-terminus: UDP-N-acetylenolpyruvoylglucosamine reductase (306 aa).

The FAD-binding PCMH-type domain occupies 29 to 193 (RVGGPADWLF…IRASLRGTPD (165 aa)). Residue arginine 173 is part of the active site. Serine 222 (proton donor) is an active-site residue. Residue glutamate 292 is part of the active site.

Belongs to the MurB family. Requires FAD as cofactor.

It is found in the cytoplasm. The enzyme catalyses UDP-N-acetyl-alpha-D-muramate + NADP(+) = UDP-N-acetyl-3-O-(1-carboxyvinyl)-alpha-D-glucosamine + NADPH + H(+). The protein operates within cell wall biogenesis; peptidoglycan biosynthesis. Its function is as follows. Cell wall formation. The sequence is that of UDP-N-acetylenolpyruvoylglucosamine reductase from Gluconobacter oxydans (strain 621H) (Gluconobacter suboxydans).